We begin with the raw amino-acid sequence, 474 residues long: tRNA-2-methylthio-N(6)-dimethylallyladenosine synthase (474 aa).

The region spanning 3-120 is the MTTase N-terminal domain; that stretch reads QKLHIKTWGC…LPEMINQIRG (118 aa). Positions 12, 49, 83, 157, 161, and 164 each coordinate [4Fe-4S] cluster. Residues 143–375 form the Radical SAM core domain; it reads RAEGPTAFVS…QERINQQAAQ (233 aa). In terms of domain architecture, TRAM spans 378 to 441; that stretch reads RRMLGTEQRV…TNSLRGEVVR (64 aa).

It belongs to the methylthiotransferase family. MiaB subfamily. In terms of assembly, monomer. Requires [4Fe-4S] cluster as cofactor.

It is found in the cytoplasm. The enzyme catalyses N(6)-dimethylallyladenosine(37) in tRNA + (sulfur carrier)-SH + AH2 + 2 S-adenosyl-L-methionine = 2-methylsulfanyl-N(6)-dimethylallyladenosine(37) in tRNA + (sulfur carrier)-H + 5'-deoxyadenosine + L-methionine + A + S-adenosyl-L-homocysteine + 2 H(+). In terms of biological role, catalyzes the methylthiolation of N6-(dimethylallyl)adenosine (i(6)A), leading to the formation of 2-methylthio-N6-(dimethylallyl)adenosine (ms(2)i(6)A) at position 37 in tRNAs that read codons beginning with uridine. The protein is tRNA-2-methylthio-N(6)-dimethylallyladenosine synthase of Haemophilus influenzae (strain PittGG).